The primary structure comprises 195 residues: Probable GTP-binding protein EngB (195 aa).

Residues 24-195 form the EngB-type G domain; the sequence is ELPEIALAGR…EAWDAILEKL (172 aa). Residues 32 to 39, 59 to 63, 77 to 80, 144 to 147, and 176 to 178 each bind GTP; these read GRSNVGKS, GKTQL, DVPG, TKAD, and FSS. The Mg(2+) site is built by serine 39 and threonine 61.

The protein belongs to the TRAFAC class TrmE-Era-EngA-EngB-Septin-like GTPase superfamily. EngB GTPase family. The cofactor is Mg(2+).

In terms of biological role, necessary for normal cell division and for the maintenance of normal septation. The protein is Probable GTP-binding protein EngB of Streptococcus pneumoniae (strain Hungary19A-6).